Consider the following 707-residue polypeptide: Toxin RTX-I translocation ATP-binding protein (707 aa).

In terms of domain architecture, Peptidase C39 spans 1 to 125 (MDFYREEDYG…SLYQGKLILV (125 aa)). H83 is a catalytic residue. Positions 154-436 (FIETLIVSIF…LAQLWQDFQQ (283 aa)) constitute an ABC transmembrane type-1 domain. Transmembrane regions (helical) follow at residues 158-178 (LIVS…FQVV), 188-208 (FSTL…EIVL), 295-315 (LVIL…SPIL), 387-407 (VVMV…DLSI), and 410-430 (LIAF…LAQL). Positions 468–703 (ITFRNIRFRY…PNGLYHYLHQ (236 aa)) constitute an ABC transporter domain. 502-509 (GRSGSGKS) is a binding site for ATP.

This sequence belongs to the ABC transporter superfamily. Protein-1 exporter (TC 3.A.1.109) family. Homodimer.

The protein localises to the cell membrane. Its function is as follows. Involved in the transport of the toxin RTX-I as well as that of RTX-II. This is Toxin RTX-I translocation ATP-binding protein (apxIB) from Actinobacillus pleuropneumoniae (Haemophilus pleuropneumoniae).